Here is a 554-residue protein sequence, read N- to C-terminus: NADH-quinone oxidoreductase subunit N 3 (554 aa).

14 consecutive transmembrane segments (helical) span residues 35-55 (LMPV…EAFV), 65-85 (LFLT…LAAG), 105-125 (PTLF…FTFA), 161-181 (GFTT…LLVF), 187-207 (LLTL…LCAV), 222-242 (YFLL…LLYG), 275-295 (ALLL…VGAV), 322-342 (VAAF…LAWD), 345-365 (PVMW…AITQ), 371-391 (LLAY…IAAS), 398-418 (VLFY…VVTL), 442-462 (VAAV…TSGF), 476-496 (GAGA…FFYI), and 525-545 (IAVG…FLDL).

This sequence belongs to the complex I subunit 2 family. As to quaternary structure, NDH-1 is composed of 14 different subunits. Subunits NuoA, H, J, K, L, M, N constitute the membrane sector of the complex.

The protein localises to the cell membrane. It catalyses the reaction a quinone + NADH + 5 H(+)(in) = a quinol + NAD(+) + 4 H(+)(out). NDH-1 shuttles electrons from NADH, via FMN and iron-sulfur (Fe-S) centers, to quinones in the respiratory chain. The immediate electron acceptor for the enzyme in this species is believed to be a menaquinone. Couples the redox reaction to proton translocation (for every two electrons transferred, four hydrogen ions are translocated across the cytoplasmic membrane), and thus conserves the redox energy in a proton gradient. The protein is NADH-quinone oxidoreductase subunit N 3 of Streptomyces griseus subsp. griseus (strain JCM 4626 / CBS 651.72 / NBRC 13350 / KCC S-0626 / ISP 5235).